A 537-amino-acid chain; its full sequence is Zinc finger and BTB domain-containing protein 18 (537 aa).

The region spanning 24-91 is the BTB domain; it reads CDSTVLVGDA…MYEGKLQFKS (68 aa). Basic and acidic residues predominate over residues 122-143; that stretch reads TAEADSTKREEDTSSCSDKVES. 2 disordered regions span residues 122-232 and 335-355; these read TAEA…RVSA and ASELERDDKGGDDDTDVLGGD. Composition is skewed to low complexity over residues 182–195 and 208–229; these read RLPSDRTTSPTTSP and SPAGSPSSSSGSLSRRSAASRR. 4 consecutive C2H2-type zinc fingers follow at residues 385-407, 425-447, 453-475, and 481-504; these read FMCPLCNKVFPSPHILQIHLSTH, PTCSICGKTFSCMYTLKRHERTH, YTCTTCGKSFQYSHNLSRHAVVH, and HACKWCERRFTQSGDLYRHIRKFH.

It belongs to the krueppel C2H2-type zinc-finger protein family. ZBTB18 subfamily.

It is found in the nucleus. In terms of biological role, transcriptional repressor that plays a role in various developmental processes. Specifically binds the consensus DNA sequence 5'-[AC]ACATCTG[GT][AC]-3' which contains the E box core, and acts by recruiting chromatin remodeling multiprotein complexes. This is Zinc finger and BTB domain-containing protein 18 (zbtb18) from Danio rerio (Zebrafish).